Reading from the N-terminus, the 111-residue chain is Cell division protein FtsB (111 aa).

The Cytoplasmic portion of the chain corresponds to 1–3 (MRL). The chain crosses the membrane as a helical span at residues 4–21 (ITLFLLLLLLAIQYPLWL). Residues 22–111 (GKGGWLRVWD…PPPAGQQAHH (90 aa)) lie on the Periplasmic side of the membrane. A coiled-coil region spans residues 31–64 (DMQKQVTAQNQRNAELKQRNTKLEGEVKDLKEGT). The tract at residues 89–111 (APAPKTSETPLPPPPPAGQQAHH) is disordered.

It belongs to the FtsB family. In terms of assembly, part of a complex composed of FtsB, FtsL and FtsQ.

It localises to the cell inner membrane. Functionally, essential cell division protein. May link together the upstream cell division proteins, which are predominantly cytoplasmic, with the downstream cell division proteins, which are predominantly periplasmic. This is Cell division protein FtsB from Ralstonia pickettii (strain 12J).